The chain runs to 537 residues: CTP synthase (537 aa).

The tract at residues 1–268 (MSTKYIFVTG…DQIVCDHLKL (268 aa)) is amidoligase domain. S14 serves as a coordination point for CTP. S14 lines the UTP pocket. Residue 15–20 (SIGKGI) participates in ATP binding. Y55 contributes to the L-glutamine binding site. D72 is an ATP binding site. D72 and E142 together coordinate Mg(2+). CTP is bound by residues 149–151 (DIE), 189–194 (KTKPTQ), and K225. UTP-binding positions include 189-194 (KTKPTQ) and K225. Residues 293-536 (RIALVGKYVE…VTAAVEKSSD (244 aa)) form the Glutamine amidotransferase type-1 domain. Residue G355 participates in L-glutamine binding. The Nucleophile; for glutamine hydrolysis role is filled by C382. L-glutamine is bound by residues 383-386 (LGMQ), E406, and R464. Active-site residues include H509 and E511.

The protein belongs to the CTP synthase family. As to quaternary structure, homotetramer.

It carries out the reaction UTP + L-glutamine + ATP + H2O = CTP + L-glutamate + ADP + phosphate + 2 H(+). The enzyme catalyses L-glutamine + H2O = L-glutamate + NH4(+). The catalysed reaction is UTP + NH4(+) + ATP = CTP + ADP + phosphate + 2 H(+). Its pathway is pyrimidine metabolism; CTP biosynthesis via de novo pathway; CTP from UDP: step 2/2. Allosterically activated by GTP, when glutamine is the substrate; GTP has no effect on the reaction when ammonia is the substrate. The allosteric effector GTP functions by stabilizing the protein conformation that binds the tetrahedral intermediate(s) formed during glutamine hydrolysis. Inhibited by the product CTP, via allosteric rather than competitive inhibition. Catalyzes the ATP-dependent amination of UTP to CTP with either L-glutamine or ammonia as the source of nitrogen. Regulates intracellular CTP levels through interactions with the four ribonucleotide triphosphates. This chain is CTP synthase, found in Streptococcus sanguinis (strain SK36).